The primary structure comprises 687 residues: Amine oxidase [copper-containing] gamma 2 (687 aa).

The signal sequence occupies residues 1-24; that stretch reads MVELSFSQLLVLLLSLLFLFTTLA. Asn-154 is a glycosylation site (N-linked (GlcNAc...) asparagine). An intrachain disulfide couples Cys-169 to Cys-191. Asn-244 carries an N-linked (GlcNAc...) asparagine glycan. Residue 333-344 coordinates substrate; it reads YMDAGEFGLGPS. The active-site Proton acceptor is the Asp-335. Cysteines 354 and 380 form a disulfide. 420-425 serves as a coordination point for substrate; sequence VGNYDY. The active-site Schiff-base intermediate with substrate; via topaquinone is the Tyr-423. Residue Tyr-423 is modified to 2',4',5'-topaquinone. Cu cation contacts are provided by His-480 and His-482. The Mn(2+) site is built by Asp-489, Met-490, and Asp-491. N-linked (GlcNAc...) asparagine glycosylation is found at Asn-497 and Asn-598. The Mn(2+) site is built by Asp-632 and Ile-633. His-643 contributes to the Cu cation binding site.

Belongs to the copper/topaquinone oxidase family. Homodimer. Cu cation serves as cofactor. It depends on Zn(2+) as a cofactor. L-topaquinone is required as a cofactor. The cofactor is Mn(2+). In terms of processing, topaquinone (TPQ) is generated by copper-dependent autoxidation of a specific tyrosyl residue. Expressed in roots, leaves and cotyledons.

The protein localises to the secreted. Its subcellular location is the extracellular space. The protein resides in the apoplast. The catalysed reaction is a primary methyl amine + O2 + H2O = an aldehyde + H2O2 + NH4(+). The protein operates within amine and polyamine degradation; putrescine degradation. Functionally, copper amine oxidase that can use putrescine and spermidine as substrates. The polypeptide is Amine oxidase [copper-containing] gamma 2 (Arabidopsis thaliana (Mouse-ear cress)).